Reading from the N-terminus, the 625-residue chain is MAIDGEKKKDPRAWDALTPSLAEWILDAIKSMGFEKMTPVQASTIPLFMGNKDVVVEAVTGSGKTLSFLIPVVEKLLRLEEPIKKHHVGAIIVSPTRELATQIHSVLTSLLAFHEPSAGALKPLEEGEKRKPSSTLRVVSQLLLGGTTTPAQDLSRFLKNSPNLLISTPGRLLELLSSPHVHCPQSSFEVLVLDEADRLLDLGFKDDLQKILSRLPKQRRTGLFSASVSEAVGEIVRVGLRNPVKIAVKVKGAGGDKMTPASLQMSYLLTPPTHKFPALLSLLSQLQPTPQKSIIYLSTCAAVDYFQPLLEAVLPKQFALVSLHGKHPPNVRQRNFSKYVAAVSPTILLTTDVAARGLDIPQVDLVVQIDPPSDPKVFLHRCGRAGRAGRKGLSVIFLQPGREEDYIPFLEIRKTPITLFKRPEISTTDDAAKILISKMRKEVLADRALYDKGQRAFVSWVQAYSKHQASSIFRVADLDWTDLGNAWALVRLPKMPELKKWEGDKTLGIKLDMSEYAYKDKVREKARRVAMEEAKNAGPYVPTEEQIARKKQREAWSQKHEKQDLKELKREKKKRKREIERLDKMTDEEKRVEQEKERELQALIEQVKRRKIEDDADEEFEGFAD.

Positions 14–42 (WDALTPSLAEWILDAIKSMGFEKMTPVQA) match the Q motif motif. The Helicase ATP-binding domain maps to 45 to 246 (IPLFMGNKDV…RVGLRNPVKI (202 aa)). 58 to 65 (AVTGSGKT) contributes to the ATP binding site. Positions 194 to 197 (DEAD) match the DEAD box motif. Residues 278 to 436 (ALLSLLSQLQ…TTDDAAKILI (159 aa)) enclose the Helicase C-terminal domain. Residues 550–597 (KKQREAWSQKHEKQDLKELKREKKKRKREIERLDKMTDEEKRVEQEKE) form a disordered region. Composition is skewed to basic and acidic residues over residues 553–570 (REAW…ELKR) and 577–597 (REIE…QEKE). Residues 557–614 (SQKHEKQDLKELKREKKKRKREIERLDKMTDEEKRVEQEKERELQALIEQVKRRKIED) are a coiled coil.

It belongs to the DEAD box helicase family. DDX55/SPB4 subfamily. Component of pre-60S ribosomal complexes.

Its subcellular location is the nucleus. The protein localises to the nucleolus. The catalysed reaction is ATP + H2O = ADP + phosphate + H(+). In terms of biological role, ATP-binding RNA helicase involved in the biogenesis of 60S ribosomal subunits. Binds 90S pre-ribosomal particles and dissociates from pre-60S ribosomal particles after processing of 27SB pre-rRNA. Required for the normal formation of 18S rRNA through the processing of pre-rRNAs at sites A0, A1 and A2, and the normal formation of 25S and 5.8S rRNAs through the processing of pre-rRNAs at sites C1 and C2. The sequence is that of ATP-dependent rRNA helicase spb4 from Sclerotinia sclerotiorum (strain ATCC 18683 / 1980 / Ss-1) (White mold).